Here is a 208-residue protein sequence, read N- to C-terminus: MATTENAESGSPENKVDRADPDAKYPLKVLYCGVCSLPAEYCEYMPEPAKCKQWLEKNFPDVFAKLTLGTAPKQESKGGGGGEDGGGGRGRGEAPPAGEEEEKKKQKRGGRGQIKQKKKTVPQKVTIAKIPRAKKKYVTRVCGLATFDIELKEAQRFFAQKFSCGASVTAEDEIIIQGDFTDDIIDVIQEKWPEVDDDSIDDLGEVKK.

The span at 1–12 (MATTENAESGSP) shows a compositional bias: polar residues. 2 disordered regions span residues 1 to 20 (MATT…DRAD) and 69 to 120 (GTAP…KKKT). At S9 the chain carries Phosphoserine. A compositionally biased stretch (gly residues) spans 77–89 (KGGGGGEDGGGGR). Residues 105-120 (KQKRGGRGQIKQKKKT) show a composition bias toward basic residues. The SUI1 domain maps to 125-192 (VTIAKIPRAK…DIIDVIQEKW (68 aa)).

This sequence belongs to the DENR family.

Its function is as follows. May be involved in the translation of target mRNAs by scanning and recognition of the initiation codon. Involved in translation initiation; promotes recruitment of aminoacetyled initiator tRNA to P site of 40S ribosomes. Can promote release of deacylated tRNA and mRNA from recycled 40S subunits following ABCE1-mediated dissociation of post-termination ribosomal complexes into subunits. In Danio rerio (Zebrafish), this protein is Density-regulated protein (denr).